Consider the following 173-residue polypeptide: Crossover junction endodeoxyribonuclease RuvC (173 aa).

Residues Asp-8, Glu-67, and Asp-139 contribute to the active site. Mg(2+)-binding residues include Asp-8, Glu-67, and Asp-139.

It belongs to the RuvC family. As to quaternary structure, homodimer which binds Holliday junction (HJ) DNA. The HJ becomes 2-fold symmetrical on binding to RuvC with unstacked arms; it has a different conformation from HJ DNA in complex with RuvA. In the full resolvosome a probable DNA-RuvA(4)-RuvB(12)-RuvC(2) complex forms which resolves the HJ. Requires Mg(2+) as cofactor.

The protein localises to the cytoplasm. The enzyme catalyses Endonucleolytic cleavage at a junction such as a reciprocal single-stranded crossover between two homologous DNA duplexes (Holliday junction).. In terms of biological role, the RuvA-RuvB-RuvC complex processes Holliday junction (HJ) DNA during genetic recombination and DNA repair. Endonuclease that resolves HJ intermediates. Cleaves cruciform DNA by making single-stranded nicks across the HJ at symmetrical positions within the homologous arms, yielding a 5'-phosphate and a 3'-hydroxyl group; requires a central core of homology in the junction. The consensus cleavage sequence is 5'-(A/T)TT(C/G)-3'. Cleavage occurs on the 3'-side of the TT dinucleotide at the point of strand exchange. HJ branch migration catalyzed by RuvA-RuvB allows RuvC to scan DNA until it finds its consensus sequence, where it cleaves and resolves the cruciform DNA. The polypeptide is Crossover junction endodeoxyribonuclease RuvC (Photorhabdus laumondii subsp. laumondii (strain DSM 15139 / CIP 105565 / TT01) (Photorhabdus luminescens subsp. laumondii)).